The chain runs to 281 residues: Probable endonuclease 4 (281 aa).

The Zn(2+) site is built by histidine 67, histidine 107, glutamate 144, aspartate 178, histidine 181, histidine 215, aspartate 228, histidine 230, and glutamate 260.

It belongs to the AP endonuclease 2 family. Zn(2+) is required as a cofactor.

It catalyses the reaction Endonucleolytic cleavage to 5'-phosphooligonucleotide end-products.. Functionally, endonuclease IV plays a role in DNA repair. It cleaves phosphodiester bonds at apurinic or apyrimidinic (AP) sites, generating a 3'-hydroxyl group and a 5'-terminal sugar phosphate. The sequence is that of Probable endonuclease 4 from Methanocorpusculum labreanum (strain ATCC 43576 / DSM 4855 / Z).